Consider the following 235-residue polypeptide: BPI fold-containing family A member 2 (235 aa).

An N-terminal signal peptide occupies residues 1–20 (MFQLGSLVVLCGLLIGTSES). Cysteine 161 and cysteine 204 are disulfide-bonded.

This sequence belongs to the BPI/LBP/Plunc superfamily. Plunc family. In terms of tissue distribution, expressed in parotid, submandibular and sublingual glands.

The protein resides in the secreted. Its function is as follows. Has strong antibacterial activity against P.aeruginosa. The polypeptide is BPI fold-containing family A member 2 (Bpifa2) (Rattus norvegicus (Rat)).